The primary structure comprises 459 residues: Elongation factor 1-alpha (459 aa).

G2 bears the N,N,N-trimethylglycine mark. At K3 the chain carries N6,N6-dimethyllysine; alternate. K3 carries the N6-methyllysine; alternate modification. The tr-type G domain occupies 5 to 239; it reads KSHINVVVIG…DAIDPPSRPT (235 aa). Residues 14–21 are G1; the sequence is GHVDSGKS. Residue 14-21 participates in GTP binding; the sequence is GHVDSGKS. K30 carries the post-translational modification N6-methyllysine. The tract at residues 70-74 is G2; sequence GITID. K79 carries the N6,N6,N6-trimethyllysine modification. A G3 region spans residues 91-94; that stretch reads DAPG. GTP is bound by residues 91–95 and 153–156; these read DAPGH and NKMD. Residues 153–156 form a G4 region; sequence NKMD. The interval 192 to 194 is G5; the sequence is SGF. At K315 the chain carries N6,N6-dimethyllysine; alternate. The residue at position 315 (K315) is an N6-methyllysine; alternate. At K389 the chain carries N6-methyllysine.

It belongs to the TRAFAC class translation factor GTPase superfamily. Classic translation factor GTPase family. EF-Tu/EF-1A subfamily.

Its subcellular location is the cytoplasm. Functionally, this protein promotes the GTP-dependent binding of aminoacyl-tRNA to the A-site of ribosomes during protein biosynthesis. This is Elongation factor 1-alpha (TEF1) from Aureobasidium pullulans (Black yeast).